We begin with the raw amino-acid sequence, 332 residues long: Small ribosomal subunit protein uS2 (332 aa).

The protein belongs to the universal ribosomal protein uS2 family.

This Nitrobacter winogradskyi (strain ATCC 25391 / DSM 10237 / CIP 104748 / NCIMB 11846 / Nb-255) protein is Small ribosomal subunit protein uS2.